Consider the following 535-residue polypeptide: Mannan polymerase I complex VAN1 subunit (535 aa).

The Cytoplasmic segment spans residues Met1–Val64. The disordered stretch occupies residues Leu22 to Lys48. Residue Ser25 is modified to Phosphoserine. The helical; Signal-anchor for type II membrane protein transmembrane segment at Ser65–Ile81 threads the bilayer. Topologically, residues Ser82 to Glu535 are lumenal. 2 N-linked (GlcNAc...) asparagine glycosylation sites follow: Asn215 and Asn251.

Belongs to the ANP1/MMN9/VAN1 family. Component of the M-Pol I complex which contains MNN9 and VAN1. Glycosylated.

The protein resides in the endoplasmic reticulum membrane. It is found in the golgi apparatus membrane. Its function is as follows. Involved in regulation of the phosphorylation of a number of proteins, some of which appear to be important in cell growth control. In terms of biological role, the M-Pol I complex possesses alpha-1,6-mannosyltransferase activity and is probably involved in the elongation of the mannan backbone of N-linked glycans on cell wall and periplasmic proteins. The protein is Mannan polymerase I complex VAN1 subunit (VAN1) of Saccharomyces cerevisiae (strain ATCC 204508 / S288c) (Baker's yeast).